A 424-amino-acid chain; its full sequence is Histidine--tRNA ligase (424 aa).

Belongs to the class-II aminoacyl-tRNA synthetase family. As to quaternary structure, homodimer.

The protein localises to the cytoplasm. The catalysed reaction is tRNA(His) + L-histidine + ATP = L-histidyl-tRNA(His) + AMP + diphosphate + H(+). The sequence is that of Histidine--tRNA ligase from Escherichia coli (strain SE11).